Reading from the N-terminus, the 1342-residue chain is DNA-directed RNA polymerase subunit beta (1342 aa).

The protein belongs to the RNA polymerase beta chain family. As to quaternary structure, the RNAP catalytic core consists of 2 alpha, 1 beta, 1 beta' and 1 omega subunit. When a sigma factor is associated with the core the holoenzyme is formed, which can initiate transcription.

The catalysed reaction is RNA(n) + a ribonucleoside 5'-triphosphate = RNA(n+1) + diphosphate. In terms of biological role, DNA-dependent RNA polymerase catalyzes the transcription of DNA into RNA using the four ribonucleoside triphosphates as substrates. This Yersinia enterocolitica serotype O:8 / biotype 1B (strain NCTC 13174 / 8081) protein is DNA-directed RNA polymerase subunit beta.